We begin with the raw amino-acid sequence, 117 residues long: Ribonuclease P protein component (117 aa).

This sequence belongs to the RnpA family. As to quaternary structure, consists of a catalytic RNA component (M1 or rnpB) and a protein subunit.

The catalysed reaction is Endonucleolytic cleavage of RNA, removing 5'-extranucleotides from tRNA precursor.. RNaseP catalyzes the removal of the 5'-leader sequence from pre-tRNA to produce the mature 5'-terminus. It can also cleave other RNA substrates such as 4.5S RNA. The protein component plays an auxiliary but essential role in vivo by binding to the 5'-leader sequence and broadening the substrate specificity of the ribozyme. The sequence is that of Ribonuclease P protein component from Limosilactobacillus reuteri subsp. reuteri (strain JCM 1112) (Lactobacillus reuteri).